The chain runs to 390 residues: Endonuclease 8-like 1 (390 aa).

Pro-2 functions as the Schiff-base intermediate with DNA in the catalytic mechanism. Glu-3 acts as the Proton donor in catalysis. Lys-54 serves as the catalytic Proton donor; for beta-elimination activity. Asn-176 lines the DNA pocket. A disordered region spans residues 278 to 390 (TIWFQGDPGP…SLEPEGTSAS (113 aa)). Residues 291–301 (KGRKSRKKKSK) show a composition bias toward basic residues. Residues 335–347 (TATQRPEGTSLQQ) show a composition bias toward polar residues. Arg-339 contributes to the DNA binding site. The Proton donor; for delta-elimination activity role is filled by Arg-339.

The protein belongs to the FPG family. In terms of tissue distribution, ubiquitous.

The protein localises to the cytoplasm. It is found in the cytoskeleton. The protein resides in the microtubule organizing center. It localises to the centrosome. Its subcellular location is the nucleus. The protein localises to the chromosome. The catalysed reaction is 2'-deoxyribonucleotide-(2'-deoxyribose 5'-phosphate)-2'-deoxyribonucleotide-DNA = a 3'-end 2'-deoxyribonucleotide-(2,3-dehydro-2,3-deoxyribose 5'-phosphate)-DNA + a 5'-end 5'-phospho-2'-deoxyribonucleoside-DNA + H(+). Its function is as follows. Involved in base excision repair of DNA damaged by oxidation or by mutagenic agents. Acts as a DNA glycosylase that recognizes and removes damaged bases. Has a preference for oxidized pyrimidines, such as thymine glycol, formamidopyrimidine (Fapy) and 5-hydroxyuracil. Has marginal activity towards 8-oxoguanine. Has AP (apurinic/apyrimidinic) lyase activity and introduces nicks in the DNA strand. Cleaves the DNA backbone by beta-delta elimination to generate a single-strand break at the site of the removed base with both 3'- and 5'-phosphates. Has DNA glycosylase/lyase activity towards mismatched uracil and thymine, in particular in U:C and T:C mismatches. Specifically binds 5-hydroxymethylcytosine (5hmC), suggesting that it acts as a specific reader of 5hmC. The protein is Endonuclease 8-like 1 (NEIL1) of Homo sapiens (Human).